We begin with the raw amino-acid sequence, 394 residues long: NAD(P)H-quinone oxidoreductase subunit H (394 aa).

The protein belongs to the complex I 49 kDa subunit family. As to quaternary structure, NDH-1 can be composed of about 15 different subunits; different subcomplexes with different compositions have been identified which probably have different functions.

The protein resides in the cellular thylakoid membrane. It carries out the reaction a plastoquinone + NADH + (n+1) H(+)(in) = a plastoquinol + NAD(+) + n H(+)(out). The catalysed reaction is a plastoquinone + NADPH + (n+1) H(+)(in) = a plastoquinol + NADP(+) + n H(+)(out). Functionally, NDH-1 shuttles electrons from an unknown electron donor, via FMN and iron-sulfur (Fe-S) centers, to quinones in the respiratory and/or the photosynthetic chain. The immediate electron acceptor for the enzyme in this species is believed to be plastoquinone. Couples the redox reaction to proton translocation, and thus conserves the redox energy in a proton gradient. Cyanobacterial NDH-1 also plays a role in inorganic carbon-concentration. The polypeptide is NAD(P)H-quinone oxidoreductase subunit H (Microcystis aeruginosa (strain NIES-843 / IAM M-2473)).